Here is a 255-residue protein sequence, read N- to C-terminus: Gene 54 protein (255 aa).

The polypeptide is Gene 54 protein (54) (Mycobacterium phage D29 (Mycobacteriophage D29)).